A 592-amino-acid polypeptide reads, in one-letter code: Glutathione-regulated potassium-efflux system protein KefB (592 aa).

The next 13 helical transmembrane spans lie at 4-24 (SDFL…VPLA), 29-49 (IGAV…GLGF), 55-75 (EILH…GLEL), 87-107 (IFGV…GLLM), 115-135 (AAVV…LQLM), 152-172 (VLLF…LLAG), 177-197 (HFDW…LIGG), 207-227 (FIAA…LVLG), 230-250 (LFMD…GVLL), 268-288 (GLLL…GVLY), 291-311 (LLWV…VLYL), 324-344 (MQFA…FSTA), and 356-376 (ALLL…MKLV). The RCK N-terminal domain maps to 400–519 (KPQVIVVGFG…AGVTQFSRET (120 aa)).

The protein belongs to the monovalent cation:proton antiporter 2 (CPA2) transporter (TC 2.A.37) family. KefB subfamily. As to quaternary structure, interacts with the regulatory subunit KefG.

It is found in the cell inner membrane. Pore-forming subunit of a potassium efflux system that confers protection against electrophiles. Catalyzes K(+)/H(+) antiport. This chain is Glutathione-regulated potassium-efflux system protein KefB, found in Escherichia coli O157:H7.